Reading from the N-terminus, the 105-residue chain is Large ribosomal subunit protein bL21c (105 aa).

Belongs to the bacterial ribosomal protein bL21 family. In terms of assembly, part of the 50S ribosomal subunit.

The protein resides in the plastid. Its subcellular location is the chloroplast. Functionally, this protein binds to 23S rRNA. The chain is Large ribosomal subunit protein bL21c from Phaeodactylum tricornutum (strain CCAP 1055/1).